We begin with the raw amino-acid sequence, 612 residues long: T-cell immunomodulatory protein (612 aa).

Residues 1–33 (MAAAGRLPSSWALFSPLLAGLALLGVGPVPARA) form the signal peptide. N-linked (GlcNAc...) asparagine glycans are attached at residues N36, N95, N139, N146, N151, N176, N188, N226, and N243. One copy of the FG-GAP; atypical repeat lies at 258–293 (VVGQSAFADFDGDGHMDHLLPGCEDKNCQKSTIYLV). N353, N371, and N482 each carry an N-linked (GlcNAc...) asparagine glycan. The helical transmembrane segment at 567-587 (VLLTAIALIGVCVFILAIIGI) threads the bilayer.

The protein belongs to the TIP family. Interacts with RUVBL1, RUVBL2 and alpha-tubulin. Ubiquitously expressed.

It is found in the secreted. The protein localises to the membrane. Functionally, modulator of T-cell function. Has a protective effect in graft versus host disease model. The sequence is that of T-cell immunomodulatory protein from Homo sapiens (Human).